Consider the following 101-residue polypeptide: Large ribosomal subunit protein eL21 (101 aa).

Over residues 1–18 (MVKHSRGYRTRSRSLLRK) the composition is skewed to basic residues. Residues 1 to 23 (MVKHSRGYRTRSRSLLRKSPRER) are disordered.

Belongs to the eukaryotic ribosomal protein eL21 family.

In Saccharolobus islandicus (strain Y.G.57.14 / Yellowstone #1) (Sulfolobus islandicus), this protein is Large ribosomal subunit protein eL21.